We begin with the raw amino-acid sequence, 331 residues long: Very-long-chain 3-oxoacyl-CoA reductase (331 aa).

A helical membrane pass occupies residues 15–35 (VQWALAGVGALYISAKVLSYL). The NADP(+) site is built by Val60, Asp115, Asp123, Asn142, Tyr209, Lys213, Ile242, and Ser244. The active-site Proton donor is the Tyr209. The active-site Lowers pKa of active site Tyr is Lys213.

This sequence belongs to the short-chain dehydrogenases/reductases (SDR) family.

Its subcellular location is the endoplasmic reticulum membrane. It catalyses the reaction a very-long-chain (3R)-3-hydroxyacyl-CoA + NADP(+) = a very-long-chain 3-oxoacyl-CoA + NADPH + H(+). Its pathway is lipid metabolism; fatty acid biosynthesis. Its function is as follows. Component of the microsomal membrane bound fatty acid elongation system, which produces the 26-carbon very long-chain fatty acids (VLCFA) from palmitate. Catalyzes the reduction of the 3-ketoacyl-CoA intermediate that is formed in each cycle of fatty acid elongation. VLCFAs serve as precursors for ceramide and sphingolipids. This Pyricularia oryzae (strain 70-15 / ATCC MYA-4617 / FGSC 8958) (Rice blast fungus) protein is Very-long-chain 3-oxoacyl-CoA reductase.